Here is a 229-residue protein sequence, read N- to C-terminus: 7-cyano-7-deazaguanine synthase (229 aa).

ATP is bound at residue 8-18 (CSGGLDSSVIA). C190, C203, C206, and C209 together coordinate Zn(2+).

It belongs to the QueC family. The cofactor is Zn(2+).

The catalysed reaction is 7-carboxy-7-deazaguanine + NH4(+) + ATP = 7-cyano-7-deazaguanine + ADP + phosphate + H2O + H(+). The protein operates within purine metabolism; 7-cyano-7-deazaguanine biosynthesis. In terms of biological role, catalyzes the ATP-dependent conversion of 7-carboxy-7-deazaguanine (CDG) to 7-cyano-7-deazaguanine (preQ(0)). In Methanopyrus kandleri (strain AV19 / DSM 6324 / JCM 9639 / NBRC 100938), this protein is 7-cyano-7-deazaguanine synthase.